The sequence spans 325 residues: Tetraacyldisaccharide 4'-kinase (325 aa).

55 to 62 (TAGGNGKT) serves as a coordination point for ATP.

The protein belongs to the LpxK family.

The enzyme catalyses a lipid A disaccharide + ATP = a lipid IVA + ADP + H(+). It functions in the pathway glycolipid biosynthesis; lipid IV(A) biosynthesis; lipid IV(A) from (3R)-3-hydroxytetradecanoyl-[acyl-carrier-protein] and UDP-N-acetyl-alpha-D-glucosamine: step 6/6. Functionally, transfers the gamma-phosphate of ATP to the 4'-position of a tetraacyldisaccharide 1-phosphate intermediate (termed DS-1-P) to form tetraacyldisaccharide 1,4'-bis-phosphate (lipid IVA). In Enterobacter sp. (strain 638), this protein is Tetraacyldisaccharide 4'-kinase.